A 294-amino-acid chain; its full sequence is Deubiquitinase OTUD6B (294 aa).

The segment at V85 to D120 is disordered. Over residues K111 to D120 the composition is skewed to basic and acidic residues. In terms of domain architecture, OTU spans L150 to L287. The tract at residues I155–C161 is cys-loop. D158 is a catalytic residue. The active-site Nucleophile is the C161. The segment at I222 to L232 is variable-loop. Residues Y270 to H280 are his-loop. The active site involves H280.

The enzyme catalyses Thiol-dependent hydrolysis of ester, thioester, amide, peptide and isopeptide bonds formed by the C-terminal Gly of ubiquitin (a 76-residue protein attached to proteins as an intracellular targeting signal).. In terms of biological role, deubiquitinating enzyme that may play a role in the ubiquitin-dependent regulation of different cellular processes. The sequence is that of Deubiquitinase OTUD6B (otud6b) from Xenopus laevis (African clawed frog).